Here is a 240-residue protein sequence, read N- to C-terminus: 45 kDa antigen (240 aa).

2 Fibronectin type-III domains span residues 1–109 (EFPD…FHTL) and 110–210 (ANGT…KSGH).

In Taenia ovis (Sheep tapeworm), this protein is 45 kDa antigen.